Reading from the N-terminus, the 254-residue chain is Nickel import ATP-binding protein NikD (254 aa).

The ABC transporter domain maps to 2–241 (PQQIELRDIA…PKHAVTRSLV (240 aa)). 36–43 (GGSGSGKS) contacts ATP.

Belongs to the ABC transporter superfamily. Nickel importer (TC 3.A.1.5.3) family. As to quaternary structure, the complex is composed of two ATP-binding proteins (NikD and NikE), two transmembrane proteins (NikB and NikC) and a solute-binding protein (NikA).

The protein localises to the cell inner membrane. The catalysed reaction is Ni(2+)(out) + ATP + H2O = Ni(2+)(in) + ADP + phosphate + H(+). In terms of biological role, part of the ABC transporter complex NikABCDE involved in nickel import. Responsible for energy coupling to the transport system. This Shigella dysenteriae serotype 1 (strain Sd197) protein is Nickel import ATP-binding protein NikD.